Here is a 1260-residue protein sequence, read N- to C-terminus: Methionine synthase (1260 aa).

One can recognise a Hcy-binding domain in the interval 13–333; it reads FGIIRKILSE…DHIRAFCNAI (321 aa). Cys-255, Cys-318, and Cys-319 together coordinate Zn(2+). The region spanning 364–625 is the Pterin-binding domain; that stretch reads FVNVGERCNV…IPKDLLKLVE (262 aa). The B12-binding N-terminal domain maps to 655–749; that stretch reads EVEEWRNKPV…FMEEEKRLKR (95 aa). Methylcob(III)alamin contacts are provided by residues Glu-699, 775 to 779, His-778, Ser-823, Thr-827, and Ala-879; that span reads GDVHD. Positions 766–883 constitute a B12-binding domain; it reads GVVVLATVKG…VHVLDASRSV (118 aa). Residues 916–1256 enclose the AdoMet activation domain; the sequence is SLKDRKYTSL…LSSILSYDRL (341 aa). Residues Asp-966, Arg-1163, and 1218–1219 each bind S-adenosyl-L-methionine; that span reads YF.

The protein belongs to the vitamin-B12 dependent methionine synthase family. It depends on methylcob(III)alamin as a cofactor. The cofactor is Zn(2+).

It catalyses the reaction (6S)-5-methyl-5,6,7,8-tetrahydrofolate + L-homocysteine = (6S)-5,6,7,8-tetrahydrofolate + L-methionine. Its pathway is amino-acid biosynthesis; L-methionine biosynthesis via de novo pathway; L-methionine from L-homocysteine (MetH route): step 1/1. Catalyzes the transfer of a methyl group from methyl-cobalamin to homocysteine, yielding enzyme-bound cob(I)alamin and methionine. Subsequently, remethylates the cofactor using methyltetrahydrofolate. This chain is Methionine synthase (mtr), found in Dictyostelium discoideum (Social amoeba).